The sequence spans 539 residues: T-complex protein 1 subunit zeta (539 aa).

This sequence belongs to the TCP-1 chaperonin family. In terms of assembly, heterooligomeric complex of about 850 to 900 kDa that forms two stacked rings, 12 to 16 nm in diameter.

It is found in the cytoplasm. Its function is as follows. Molecular chaperone; assists the folding of proteins upon ATP hydrolysis. Known to play a role, in vitro, in the folding of actin and tubulin. This chain is T-complex protein 1 subunit zeta (cct6), found in Dictyostelium discoideum (Social amoeba).